The following is a 437-amino-acid chain: NADH-ubiquinone oxidoreductase chain 4 (437 aa).

13 consecutive transmembrane segments (helical) span residues 8 to 28, 50 to 70, 78 to 98, 100 to 120, 132 to 152, 177 to 197, 212 to 232, 239 to 259, 266 to 286, 297 to 317, 324 to 344, 361 to 381, and 417 to 437; these read GASI…AFII, LTPI…LVLI, YKYI…FCVC, FLTF…LILL, FYLM…LLYL, LVGL…HLWL, LAGV…NFII, VISV…IICI, ALVA…ILMM, TMIA…LSYL, LMFM…WFLF, LLII…MCII, and HVLT…LFSV.

It belongs to the complex I subunit 4 family.

It localises to the mitochondrion membrane. The catalysed reaction is a ubiquinone + NADH + 5 H(+)(in) = a ubiquinol + NAD(+) + 4 H(+)(out). Core subunit of the mitochondrial membrane respiratory chain NADH dehydrogenase (Complex I) that is believed to belong to the minimal assembly required for catalysis. Complex I functions in the transfer of electrons from NADH to the respiratory chain. The immediate electron acceptor for the enzyme is believed to be ubiquinone. This chain is NADH-ubiquinone oxidoreductase chain 4 (ND4), found in Albinaria caerulea (Land snail).